A 1072-amino-acid polypeptide reads, in one-letter code: RIMS-binding protein 2 (1072 aa).

The 68-residue stretch at 181-248 (GKVHLCVARY…PSNFVDFIQD (68 aa)) folds into the SH3 1 domain. Fibronectin type-III domains are found at residues 311–404 (VPYP…GKDV), 407–489 (APSQ…KKEA), and 503–604 (PPQD…VPPA). 2 disordered regions span residues 597-681 (PDLL…APVS) and 713-800 (SAGQ…TSHN). Pro residues predominate over residues 599–615 (LLVPPAPHPRTAPPPKP). A compositionally biased stretch (basic and acidic residues) spans 620-635 (MDTKDQHLGPHVKVDE). Low complexity predominate over residues 660-670 (GPGRRSPSPSR). Phosphoserine is present on residues Ser-720 and Ser-728. Basic and acidic residues-rich tracts occupy residues 730 to 743 (EVKR…DFLK) and 754 to 765 (CHGDEYHTESSR). Over residues 771–781 (DIMEEDEEELY) the composition is skewed to acidic residues. 2 positions are modified to phosphoserine: Ser-852 and Ser-859. A Phosphothreonine modification is found at Thr-861. 2 SH3 domains span residues 868–936 (LPAR…EIHA) and 972–1039 (VPTR…EVPD). Residues 1044-1072 (HLSDAPPHYSHDPPMRSKAKRKKSVHFTP) form a disordered region. Residues 1060–1072 (SKAKRKKSVHFTP) show a composition bias toward basic residues.

Belongs to the RIMBP family. As to quaternary structure, interacts with RIMS1, RIMS2, CACNA1D and CACNA1B, and potentially with other Ca(2+) channel alpha-1 isoforms.

It is found in the cell membrane. It localises to the synapse. Its function is as follows. Plays a role in the synaptic transmission as bifunctional linker that interacts simultaneously with RIMS1, RIMS2, CACNA1D and CACNA1B. The chain is RIMS-binding protein 2 (Rimbp2) from Mus musculus (Mouse).